Consider the following 241-residue polypeptide: 1-Cys peroxiredoxin (241 aa).

The Thioredoxin domain occupies 33 to 189 (LRIGDVVPDF…IIRILDSFQL (157 aa)). Cys75 acts as the Cysteine sulfenic acid (-SOH) intermediate in catalysis.

It belongs to the peroxiredoxin family. Prx6 subfamily. Homodimer.

It carries out the reaction a hydroperoxide + [thioredoxin]-dithiol = an alcohol + [thioredoxin]-disulfide + H2O. Its function is as follows. Thiol-specific peroxidase that catalyzes the reduction of hydrogen peroxide and organic hydroperoxides to water and alcohols, respectively. Plays a role in cell protection against oxidative stress by detoxifying peroxides. The protein is 1-Cys peroxiredoxin of Dictyostelium discoideum (Social amoeba).